The sequence spans 132 residues: Small ribosomal subunit protein uS8c (132 aa).

The protein belongs to the universal ribosomal protein uS8 family. In terms of assembly, part of the 30S ribosomal subunit.

Its subcellular location is the plastid. It is found in the chloroplast. In terms of biological role, one of the primary rRNA binding proteins, it binds directly to 16S rRNA central domain where it helps coordinate assembly of the platform of the 30S subunit. The polypeptide is Small ribosomal subunit protein uS8c (rps8) (Drimys granadensis).